The sequence spans 213 residues: Phosphatidylserine decarboxylase proenzyme (213 aa).

Ser182 (schiff-base intermediate with substrate; via pyruvic acid) is an active-site residue. Ser182 bears the Pyruvic acid (Ser); by autocatalysis mark.

This sequence belongs to the phosphatidylserine decarboxylase family. PSD-A subfamily. In terms of assembly, heterodimer of a large membrane-associated beta subunit and a small pyruvoyl-containing alpha subunit. Pyruvate serves as cofactor. In terms of processing, is synthesized initially as an inactive proenzyme. Formation of the active enzyme involves a self-maturation process in which the active site pyruvoyl group is generated from an internal serine residue via an autocatalytic post-translational modification. Two non-identical subunits are generated from the proenzyme in this reaction, and the pyruvate is formed at the N-terminus of the alpha chain, which is derived from the carboxyl end of the proenzyme. The post-translation cleavage follows an unusual pathway, termed non-hydrolytic serinolysis, in which the side chain hydroxyl group of the serine supplies its oxygen atom to form the C-terminus of the beta chain, while the remainder of the serine residue undergoes an oxidative deamination to produce ammonia and the pyruvoyl prosthetic group on the alpha chain.

Its subcellular location is the cell membrane. It catalyses the reaction a 1,2-diacyl-sn-glycero-3-phospho-L-serine + H(+) = a 1,2-diacyl-sn-glycero-3-phosphoethanolamine + CO2. It participates in phospholipid metabolism; phosphatidylethanolamine biosynthesis; phosphatidylethanolamine from CDP-diacylglycerol: step 2/2. Catalyzes the formation of phosphatidylethanolamine (PtdEtn) from phosphatidylserine (PtdSer). The chain is Phosphatidylserine decarboxylase proenzyme from Geotalea uraniireducens (strain Rf4) (Geobacter uraniireducens).